The following is a 472-amino-acid chain: Protein translocase subunit SecD (472 aa).

The next 6 helical transmembrane spans lie at 7–27, 298–318, 326–345, 349–368, 392–414, and 432–452; these read LLLL…KLPL, LVAG…YYRL, SLMI…GVTL, GIAG…VLIF, AFSS…FWFG, and SLFT…LSLP.

This sequence belongs to the SecD/SecF family. SecD subfamily. In terms of assembly, forms a complex with SecF. Part of the essential Sec protein translocation apparatus which comprises SecA, SecYEG and auxiliary proteins SecDF. Other proteins may also be involved.

It is found in the cell inner membrane. In terms of biological role, part of the Sec protein translocase complex. Interacts with the SecYEG preprotein conducting channel. SecDF uses the proton motive force (PMF) to complete protein translocation after the ATP-dependent function of SecA. Probably participates in protein translocation into and across both the cytoplasmic and thylakoid membranes in cyanobacterial cells. In Synechocystis sp. (strain ATCC 27184 / PCC 6803 / Kazusa), this protein is Protein translocase subunit SecD.